A 249-amino-acid chain; its full sequence is Exosome complex component Rrp41 (249 aa).

The protein belongs to the RNase PH family. Rrp41 subfamily. Component of the archaeal exosome complex. Forms a hexameric ring-like arrangement composed of 3 Rrp41-Rrp42 heterodimers. The hexameric ring associates with a trimer of Rrp4 and/or Csl4 subunits.

The protein resides in the cytoplasm. Functionally, catalytic component of the exosome, which is a complex involved in RNA degradation. Has 3'-&gt;5' exoribonuclease activity. Can also synthesize heteromeric RNA-tails. The chain is Exosome complex component Rrp41 from Pyrococcus horikoshii (strain ATCC 700860 / DSM 12428 / JCM 9974 / NBRC 100139 / OT-3).